We begin with the raw amino-acid sequence, 522 residues long: Sugar transport protein MST2 (522 aa).

The Cytoplasmic segment spans residues 1 to 24 (MAAATAADVAEDTASVYSGKLTLY). The helical transmembrane segment at 25-45 (VFLTCGVAATGGLIIGYDIGI) threads the bilayer. Residues 46–82 (SGGVTSMDTFLGKFFPSVLHQEQTAQGTSQYCKFNSQ) are Extracellular-facing. Residues 83-103 (PLTAFTSSLYLAALVASFFVA) form a helical membrane-spanning segment. Residues 104-111 (SFTRALGR) lie on the Cytoplasmic side of the membrane. The chain crosses the membrane as a helical span at residues 112–132 (KWSMFGGGVSFLAGATLNGAA). The Extracellular portion of the chain corresponds to 133–134 (RN). The chain crosses the membrane as a helical span at residues 135-155 (VAMLIVGRILLGIGVAFCGLS). Over 156–169 (TPIYLSEMAPPRLR) the chain is Cytoplasmic. A helical transmembrane segment spans residues 170–190 (GMLNIGLQLMITVGIFSANLV). Topologically, residues 191 to 204 (NYGAAKIRGGWGWR) are extracellular. A helical transmembrane segment spans residues 205 to 225 (VSLGLAAAPACVIAVGSLFLP). Residues 226-291 (DSPSSLINRG…DVLQRRYRPQ (66 aa)) lie on the Cytoplasmic side of the membrane. Residues 292–312 (LAMAVLIPFFQQLTGINVIMF) form a helical membrane-spanning segment. Over 313–329 (YAPVLFKTIGLGGDASL) the chain is Extracellular. Residues 330–350 (MSAVITGLVNIVATFVSIATV) form a helical membrane-spanning segment. Over 351 to 361 (DSLGRRKLLFQ) the chain is Cytoplasmic. A helical transmembrane segment spans residues 362 to 382 (GGCQMLVSQVIIGTLIGVVFG). The Extracellular segment spans residues 383 to 391 (TSGDGNISR). A helical membrane pass occupies residues 392–412 (ALAVCIVVFICVYVAGFAWSW). At 413 to 434 (GPLGVLLPSEIFPLEVRPAGQS) the chain is on the cytoplasmic side. The helical transmembrane segment at 435-455 (ISVAVNMLCTFAVAEAFLPML) threads the bilayer. Over 456–459 (CHMR) the chain is Extracellular. A helical transmembrane segment spans residues 460–480 (FGLFYFFSGWVLVMTLFVSAF). Over 481–522 (LPETKGVPIEKMTVVWRTHWFWGRFYCNQDADAHVQVANSKV) the chain is Cytoplasmic.

Belongs to the major facilitator superfamily. Sugar transporter (TC 2.A.1.1) family.

It is found in the membrane. In terms of biological role, mediates active uptake of hexoses by sugar:proton symport. Can transport glucose. This chain is Sugar transport protein MST2, found in Oryza sativa subsp. japonica (Rice).